The sequence spans 1491 residues: Pleckstrin homology domain-containing family H member 2 (1491 aa).

The stretch at 19–177 (ALEAQLMKFR…ELQEKKISCV (159 aa)) forms a coiled coil. Disordered regions lie at residues 232–435 (AEKP…PFQP), 506–546 (DDGL…LHRF), and 612–668 (SSSP…SDYA). Residues 253-264 (TSCSSEQNQKTR) are compositionally biased toward polar residues. Positions 374–385 (KEQDSSSDELNK) are enriched in basic and acidic residues. Residues 392–406 (LDYTSSSSEANTPSP) are compositionally biased toward polar residues. A compositionally biased stretch (low complexity) spans 657–666 (SDSSAASESD). PH domains lie at 702 to 796 (PLEK…SVLR) and 810 to 918 (KPAV…VAAG). Residues 954-1109 (HSKEGILSPL…PSRMEILSTL (156 aa)) enclose the MyTH4 domain. The FERM domain occupies 1120 to 1449 (FSIPVHFMNG…SYINSFHQQK (330 aa)). A disordered region spans residues 1466-1491 (QAPQARVMGSQPPLSNSRPTKGPTLL).

As to quaternary structure, self-associates. Interacts with TGFB1I1. In terms of tissue distribution, expressed in the kidney and testis. Expressed in the kidney exclusively by glomerular podocytes.

Its subcellular location is the cytoplasm. The protein localises to the cytoskeleton. The protein resides in the cell membrane. It localises to the cell projection. It is found in the lamellipodium. In the kidney glomerulus may play a role in linking podocyte foot processes to the glomerular basement membrane. May be involved in stabilization of F-actin by attenuating its depolymerization. Can recruit TGFB1I1 from focal adhesions to podocyte lamellipodia. The sequence is that of Pleckstrin homology domain-containing family H member 2 (Plekhh2) from Mus musculus (Mouse).